Here is a 180-residue protein sequence, read N- to C-terminus: 3-hydroxyanthranilate 3,4-dioxygenase (180 aa).

Arginine 44 provides a ligand contact to O2. The Fe cation site is built by histidine 48, glutamate 54, and histidine 92. Glutamate 54 serves as a coordination point for substrate. Substrate-binding residues include arginine 96 and glutamate 106. Cysteine 121, cysteine 124, cysteine 158, and cysteine 161 together coordinate a divalent metal cation.

The protein belongs to the 3-HAO family. The cofactor is Fe(2+).

The protein resides in the cytoplasm. It catalyses the reaction 3-hydroxyanthranilate + O2 = (2Z,4Z)-2-amino-3-carboxymuconate 6-semialdehyde. It functions in the pathway cofactor biosynthesis; NAD(+) biosynthesis; quinolinate from L-kynurenine: step 3/3. In terms of biological role, catalyzes the oxidative ring opening of 3-hydroxyanthranilate to 2-amino-3-carboxymuconate semialdehyde, which spontaneously cyclizes to quinolinate. This Neurospora crassa (strain ATCC 24698 / 74-OR23-1A / CBS 708.71 / DSM 1257 / FGSC 987) protein is 3-hydroxyanthranilate 3,4-dioxygenase (bna1).